We begin with the raw amino-acid sequence, 145 residues long: Large ribosomal subunit protein uL15 (145 aa).

A disordered region spans residues 1-58; that stretch reads MFSLLKPKGAAKRRKIVGRGPGSGLGKTSGRGQKGQKARNTSPRLGFEGGQTPLYRRL. The span at 19–33 shows a compositional bias: gly residues; it reads RGPGSGLGKTSGRGQ.

It belongs to the universal ribosomal protein uL15 family. Part of the 50S ribosomal subunit.

Its function is as follows. Binds to the 23S rRNA. This is Large ribosomal subunit protein uL15 from Borreliella afzelii (strain PKo) (Borrelia afzelii).